A 142-amino-acid polypeptide reads, in one-letter code: MAP3K7 C-terminal-like protein (142 aa).

Ubiquitous.

In Mus musculus (Mouse), this protein is MAP3K7 C-terminal-like protein (Map3k7cl).